A 64-amino-acid chain; its full sequence is Large ribosomal subunit protein bL35 (64 aa).

The span at 1–28 (MPKMKTKSGAAKRFKKTAGGLKHKHAFK) shows a compositional bias: basic residues. The interval 1–64 (MPKMKTKSGA…ARVERSLRLR (64 aa)) is disordered. The span at 53 to 64 (DVARVERSLRLR) shows a compositional bias: basic and acidic residues.

The protein belongs to the bacterial ribosomal protein bL35 family.

In Pseudomonas aeruginosa (strain LESB58), this protein is Large ribosomal subunit protein bL35.